A 121-amino-acid chain; its full sequence is Large ribosomal subunit protein bL12 (121 aa).

Belongs to the bacterial ribosomal protein bL12 family. In terms of assembly, homodimer. Part of the ribosomal stalk of the 50S ribosomal subunit. Forms a multimeric L10(L12)X complex, where L10 forms an elongated spine to which 2 to 4 L12 dimers bind in a sequential fashion. Binds GTP-bound translation factors.

Its function is as follows. Forms part of the ribosomal stalk which helps the ribosome interact with GTP-bound translation factors. Is thus essential for accurate translation. The sequence is that of Large ribosomal subunit protein bL12 from Tolumonas auensis (strain DSM 9187 / NBRC 110442 / TA 4).